The chain runs to 414 residues: Esterase FrsA (414 aa).

This sequence belongs to the FrsA family.

It carries out the reaction a carboxylic ester + H2O = an alcohol + a carboxylate + H(+). Catalyzes the hydrolysis of esters. This is Esterase FrsA from Escherichia coli O17:K52:H18 (strain UMN026 / ExPEC).